A 211-amino-acid chain; its full sequence is Ribosomal RNA small subunit methyltransferase G (211 aa).

S-adenosyl-L-methionine contacts are provided by residues G81, L86, 132–133 (VE), and R147.

This sequence belongs to the methyltransferase superfamily. RNA methyltransferase RsmG family.

It localises to the cytoplasm. The enzyme catalyses guanosine(527) in 16S rRNA + S-adenosyl-L-methionine = N(7)-methylguanosine(527) in 16S rRNA + S-adenosyl-L-homocysteine. Functionally, specifically methylates the N7 position of guanine in position 527 of 16S rRNA. This is Ribosomal RNA small subunit methyltransferase G from Actinobacillus succinogenes (strain ATCC 55618 / DSM 22257 / CCUG 43843 / 130Z).